Here is a 100-residue protein sequence, read N- to C-terminus: Urease subunit gamma (100 aa).

This sequence belongs to the urease gamma subunit family. As to quaternary structure, heterotrimer of UreA (gamma), UreB (beta) and UreC (alpha) subunits. Three heterotrimers associate to form the active enzyme.

Its subcellular location is the cytoplasm. It catalyses the reaction urea + 2 H2O + H(+) = hydrogencarbonate + 2 NH4(+). It functions in the pathway nitrogen metabolism; urea degradation; CO(2) and NH(3) from urea (urease route): step 1/1. This chain is Urease subunit gamma, found in Rhizobium meliloti (strain 1021) (Ensifer meliloti).